The primary structure comprises 647 residues: Homologous recombination OB-fold protein (647 aa).

Position 47 is a phosphoserine (Ser47). Disordered regions lie at residues 284–361 (ARGT…GPQG), 380–399 (SRTPQQPTHPSTRAKTRRFP), and 581–631 (SFLK…DDLD). Asymmetric dimethylarginine occurs at positions 285, 295, 329, and 337. Over residues 287–308 (TIQSSPQNRFPCQPFQSPSSWL) the composition is skewed to polar residues. The segment covering 319 to 332 (TPNSSCSTPSRTSS) has biased composition (low complexity). Positions 380–390 (SRTPQQPTHPS) are enriched in polar residues. Over residues 618–631 (ASPEEELPEADDLD) the composition is skewed to acidic residues.

As to quaternary structure, interacts with MCM8; this interaction is necessary for MCM8-MCM9 helicase complex recruitment to DNA damage sites. Interacts with RPA1; this interaction associates HROB with the RPA complex.

It is found in the nucleus. The protein resides in the chromosome. Its function is as follows. DNA-binding protein involved in homologous recombination that acts by recruiting the MCM8-MCM9 helicase complex to sites of DNA damage to promote DNA repair synthesis. The sequence is that of Homologous recombination OB-fold protein from Homo sapiens (Human).